The sequence spans 420 residues: Histidine--tRNA ligase (420 aa).

It belongs to the class-II aminoacyl-tRNA synthetase family. In terms of assembly, homodimer.

The protein localises to the cytoplasm. The catalysed reaction is tRNA(His) + L-histidine + ATP = L-histidyl-tRNA(His) + AMP + diphosphate + H(+). This chain is Histidine--tRNA ligase, found in Anaplasma phagocytophilum (strain HZ).